The chain runs to 2030 residues: MWTPTEEEKYGVVICSFRGSVPQGLVLEIGETVQILEKCEGWYRGVSTKKPNVKGIFPANYIHLKKAIVSNRGQYETVVPLEDSIVTEVTATLQEWASLWKQLYVKHKVDLFYKLRHVMNELIDLRRQLLSGHLTQDQVREVKRHITVRLDWGNEHLGLDLVPRKDFEVVDSDQISVSDLYKMHLSSRQSVQQSTSQVDTMRPRHGETCRMPVPHHFFLSLKSFTYNTIGEDTDVFFSLYDMREGKQISERFLVRLNKNGGPRNPEKIERMCALFTDLSSKDMKRDLYIVAHVIRIGRMLLNDSKKGPPHLHYRRPYGCAVLSILDVLQSLTEVKEEKDFVLKVYTCNNESEWSQIHENIIRKSSAKYSAPSASHGLIISLQLLRGDMEQIRRENPMIFNRGLAITRKLGFPDVIMPGDIRNDLYLTLEKGDFERGGKSVQKNIEVTMYVLYADGEILKDCISLGSGEPNRSSYHSFVLYHSNSPRWGEIIKLPIPIDRFRGSHLRFEFRHCSTKDKGEKKLFGFAFSTLMRDDGTTLSDDIHELYVYKCDENSTFNNHALYLGLPCCKEDYNGCPNIPSSLIFQRSTKESFFISTQLSSTKLTQNVDLLALLKWKAFPDRIMDVLGRLRHVSGEEIVKFLQDILDTLFVILDDNTEKYGLLVFQSLVFIINLLRDIKYFHFRPVMDTYIQKHFAGALAYKELIRCLKWYMDCSAELIRQDHIQEAMRALEYLFKFIVQSRILYSRATCGMEEEQFRSSIQELFQSIRFVLSLDSRNSETLLFTQAALLNSFPTIFDELLQMFTVQEVAEFVRGTLGSMPSTVHIGQSMDVVKLQSIARTVDSRLFSFSESRRILLPVVLHHIHLHLRQQKELLICSGILGSIFSIVKTSSLEADVMEEVEMMVESLLDVLLQTLLTIMSKSHAQEAVRGQRCPQCTAEITGEYVSCLLSLLRQMCDTHFQHLLDNFQSKDELKEFLLKIFCVFRNLMKMSVFPRDWMVMRLLTSNIIVTTVQYLSSALHKNFTETDFDFKVWNSYFSLAVLFINQPSLQLEIITSAKRKKILDKYGDMRVMMAYELFSMWQNLGEHKIHFIPGMIGPFLGVTLVPQPEVRNIMIPIFHDMMDWEQRKNGNFKQVEAELIDKLDSMVSEGKGDESYRELFSLLTQLFGPYPSLLEKVEQETWRETGISFVTSVTRLMERLLDYRDCMKGEETENKKIGCTVNLMNFYKSEINKEEMYIRYIHKLCDMHLQAENYTEAAFTLLLYCELLQWEDRPLREFLHYPSQTEWQRKEGLCRKIIHYFNKGKSWEFGIPLCRELACQYESLYDYQSLSWIRKMEASYYDNIMEQQRLEPEFFRVGFYGRKFPFFLRNKEYVCRGHDYERLEAFQQRMLSEFPQAVAMQHPNHPDDAILQCDAQYLQIYAVTPIPDYVDVLQMDRVPDRVKSFYRVNNVRKFRYDRPFHKGPKDKENEFKSLWIERTTLTLTHSLPGISRWFEVERRELVEVSPLENAIQVVENKNQELRSLISQYQHKQVHGNINLLSMCLNGVIDAAVNGGIARYQEAFFDKDYINKHPGDAEKITQLKELMQEQVHVLGVGLAVHEKFVHPEMRPLHKKLIDQFQMMRASLYHEFPGLDKLSPACSGTSTPRGNVLASHSPMSPESIKMTHRHSPMNLMGTGRHSSSSLSSHASSEAGNMVMLGDGSMGDAPEDLYHHMQLAYPNPRYQGSVTNVSVLSSSQASPSSSSLSSTHSAPSQMITSAPSSARGSPSLPDKYRHAREMMLLLPTYRDRPSSAMYPAAILENGQPPNFQRALFQQVVGACKPCSDPNLSVAEKGHYSLHFDAFHHPLGDTPPALPARTLRKSPLHPIPASPTSPQSGLDGSNSTLSGSASSGVSSLSESNFGHSSEAPPRTDTMDSMPSQAWNADEDLEPPYLPVHYSLSESAVLDSIKAQPCRSHSAPGCVIPQDPMDPPALPPKPYHPRLPALEHDEGVLLREETERPRGLHRKAPLPPGSAKEEQARMAWEHGRGEQ.

Residues 6–67 (EEEKYGVVIC…PANYIHLKKA (62 aa)) enclose the SH3 domain. The region spanning 421-599 (RNDLYLTLEK…ESFFISTQLS (179 aa)) is the C2 DOCK-type domain. The 408-residue stretch at 1228-1635 (KSEINKEEMY…LYHEFPGLDK (408 aa)) folds into the DOCKER domain. Disordered stretches follow at residues 1641 to 1662 (SGTS…PESI), 1734 to 1771 (SSSQ…SLPD), 1849 to 1927 (DTPP…ADED), and 1951 to 2030 (QPCR…RGEQ). A Phosphoserine modification is found at serine 1658. Residues 1734-1754 (SSSQASPSSSSLSSTHSAPSQ) are compositionally biased toward low complexity. Polar residues predominate over residues 1755 to 1765 (MITSAPSSARG). A compositionally biased stretch (low complexity) spans 1880-1902 (GSNSTLSGSASSGVSSLSESNFG). The segment covering 1967 to 1977 (PMDPPALPPKP) has biased composition (pro residues). The short motif at 1970–1976 (PPALPPK) is the SH3-binding element. Composition is skewed to basic and acidic residues over residues 1984–2001 (ALEH…ERPR) and 2014–2030 (AKEE…RGEQ).

It belongs to the DOCK family. As to quaternary structure, interacts with presenilin proteins PSEN1 and PSEN2. Interacts with CRK. As to expression, in normal brains, it is localized in the neuropil, and occasionally in the pyramidal cells, while in Alzheimer disease brains, it is associated with neurofibrillary tangles.

Its subcellular location is the cytoplasm. Potential guanine nucleotide exchange factor (GEF). GEF proteins activate some small GTPases by exchanging bound GDP for free GTP. Its interaction with presenilin proteins as well as its ability to stimulate Tau/MAPT phosphorylation suggest that it may be involved in Alzheimer disease. Ectopic expression in nerve cells decreases the secretion of amyloid-beta APBA1 protein and lowers the rate of cell-substratum adhesion, suggesting that it may affect the function of some small GTPase involved in the regulation of actin cytoskeleton or cell adhesion receptors. The sequence is that of Dedicator of cytokinesis protein 3 (DOCK3) from Homo sapiens (Human).